Reading from the N-terminus, the 222-residue chain is Small ribosomal subunit protein uS3 (222 aa).

Positions 39-107 (VREFLHKKLA…PVQINIEEVR (69 aa)) constitute a KH type-2 domain.

This sequence belongs to the universal ribosomal protein uS3 family. Part of the 30S ribosomal subunit. Forms a tight complex with proteins S10 and S14.

Its function is as follows. Binds the lower part of the 30S subunit head. Binds mRNA in the 70S ribosome, positioning it for translation. This Francisella tularensis subsp. tularensis (strain FSC 198) protein is Small ribosomal subunit protein uS3.